The chain runs to 462 residues: MAAEKTMEKIVALAKNRGFVYPGSDIYGGLANAWDYGPLGVELKNNVKKAWWLKFIQESPYNVGVDCAILMNPQVWVASGHVGGFSDPLIDCKDCKTRHRADKLIEDWNNENNIEFRVDGLKNEELMQYIKDKGVRCPSCGSANFTDIRKFNLMFKTFQGVTEDSKSEIYLRPETAQGIFVNFKNVQRTTRRKIPFGIGQIGKSFRNEITPGNFTFRTREFEQMELEFFCEPGKDLEWFKYWKDFCYNWLLSLNMKKENLKLRDHEKEELSHYSNATTDIEFLFPFGWGELWGIADRTDFDLKQHMTHSKDDLSYFDPTTNEKYVPYCIEPSLGADRVTLAFLCEAYDEEEVAEGDVRTVLRFHPALAPVKIAVLPLSKKLGEDADKVYQMLAKSYYCEYDETGSIGKRYRRQDEIGTPYCITFDFDSLEDKSVTIRDRDTMQQVRIKIEDLAAYFENKFEF.

Substrate contacts are provided by Arg100 and Glu174. ATP is bound by residues 206 to 208, 216 to 221, 290 to 291, and 334 to 337; these read RNE, FRTREF, EL, and GADR. Residue 221 to 225 coordinates substrate; it reads FEQME. 330 to 334 serves as a coordination point for substrate; sequence EPSLG.

The protein belongs to the class-II aminoacyl-tRNA synthetase family. In terms of assembly, homodimer.

Its subcellular location is the cytoplasm. It carries out the reaction tRNA(Gly) + glycine + ATP = glycyl-tRNA(Gly) + AMP + diphosphate. Catalyzes the attachment of glycine to tRNA(Gly). This is Glycine--tRNA ligase from Ruminiclostridium cellulolyticum (strain ATCC 35319 / DSM 5812 / JCM 6584 / H10) (Clostridium cellulolyticum).